The following is a 208-amino-acid chain: Uracil phosphoribosyltransferase (208 aa).

5-phospho-alpha-D-ribose 1-diphosphate contacts are provided by residues arginine 78, arginine 103, and 130–138 (DPMLATGGS). Uracil contacts are provided by residues isoleucine 193 and 198 to 200 (GDA). Aspartate 199 contacts 5-phospho-alpha-D-ribose 1-diphosphate.

The protein belongs to the UPRTase family. The cofactor is Mg(2+).

It catalyses the reaction UMP + diphosphate = 5-phospho-alpha-D-ribose 1-diphosphate + uracil. Its pathway is pyrimidine metabolism; UMP biosynthesis via salvage pathway; UMP from uracil: step 1/1. Its activity is regulated as follows. Allosterically activated by GTP. Functionally, catalyzes the conversion of uracil and 5-phospho-alpha-D-ribose 1-diphosphate (PRPP) to UMP and diphosphate. This is Uracil phosphoribosyltransferase from Aliivibrio fischeri (strain MJ11) (Vibrio fischeri).